A 93-amino-acid chain; its full sequence is Protein BOLA2 (93 aa).

Cys29 carries the S-glutathionyl cysteine; transient; alternate modification. The interval 72–93 is disordered; that stretch reads KAQTPQQWKPPSQDSATLTKDA.

This sequence belongs to the bolA/yrbA family. Homodimer. Interacts in vitro with GRXS14, GRXS15, GRXS16 and GRXS17, but not with GRXC5. Interacts in vivo only with GRXS17. Post-translationally, can be either glutathionylated or forming covalent homodimers, depending on the oxidation state.

The protein resides in the cytoplasm. It is found in the nucleus. Its function is as follows. May act either alone or in interaction with glutaredoxin as a redox-regulated transcriptional regulator, or as a factor regulating Fe-S cluster biogenesis. The GRXS17-BOLA2 heterodimer binds a labile, oxygen sensitive iron-sulfur cluster. This is Protein BOLA2 from Arabidopsis thaliana (Mouse-ear cress).